We begin with the raw amino-acid sequence, 279 residues long: Cell death abnormality protein 2 (279 aa).

Residues 14–115 enclose the SH2 domain; it reads FYFPGMSREE…EASLLAAYKK (102 aa). Residues 116–176 enclose the SH3 1 domain; it reads PIIEVVVGTF…PANYVQIQME (61 aa). Residues 181–213 form a disordered region; the sequence is RTSKGASQSSIGSSGGGAERFSSASTSSDNIEL. Residues 202–211 are compositionally biased toward polar residues; the sequence is SSASTSSDNI. Residues 214–277 form the SH3 2 domain; sequence QPRLPAKAKV…PHTYLRFTAV (64 aa).

Belongs to the CRK family. As to quaternary structure, interacts with ced-5 (via C-terminus which contains a candidate SH3-binding, proline-rich region). Forms a ternary complex with ced-5 and ced-12. Interacts (via SH2 domain) with src-1 (when activated and phosphorylated at 'Tyr-416').

Required for cell migration and engulfment of cell corpses but not for programmed cell death/apoptosis. Has a role in the migration of the 2 gonadal distal tip cells (DTCs). Plays a role in protecting dopaminergic neurons from oxidative stress-induced degeneration. The protein is Cell death abnormality protein 2 of Caenorhabditis elegans.